The following is a 178-amino-acid chain: Peptide deformylase (178 aa).

Fe cation contacts are provided by C96 and H138. E139 is a catalytic residue. Fe cation is bound at residue H142.

This sequence belongs to the polypeptide deformylase family. The cofactor is Fe(2+).

It catalyses the reaction N-terminal N-formyl-L-methionyl-[peptide] + H2O = N-terminal L-methionyl-[peptide] + formate. Its function is as follows. Removes the formyl group from the N-terminal Met of newly synthesized proteins. Requires at least a dipeptide for an efficient rate of reaction. N-terminal L-methionine is a prerequisite for activity but the enzyme has broad specificity at other positions. This is Peptide deformylase from Bartonella tribocorum (strain CIP 105476 / IBS 506).